The chain runs to 2537 residues: Histone-lysine N-methyltransferase SETD2 (2537 aa).

Residues methionine 1–lysine 12 are compositionally biased toward pro residues. Disordered regions lie at residues methionine 1–alanine 31, threonine 91–arginine 142, proline 156–arginine 483, tyrosine 510–arginine 554, and serine 607–lysine 629. A compositionally biased stretch (basic and acidic residues) spans aspartate 18–alanine 31. Positions threonine 91–asparagine 103 are enriched in polar residues. Position 132 is a phosphoserine (serine 132). Over residues proline 156–serine 166 the composition is skewed to low complexity. The segment covering proline 187–proline 205 has biased composition (pro residues). Serine 242 carries the phosphoserine modification. Residues leucine 264–glutamate 291 show a composition bias toward basic and acidic residues. Phosphoserine occurs at positions 322, 324, and 345. Composition is skewed to basic and acidic residues over residues arginine 336–arginine 401, arginine 422–arginine 433, proline 440–lysine 468, and tyrosine 510–lysine 528. Residue lysine 360 forms a Glycyl lysine isopeptide (Lys-Gly) (interchain with G-Cter in SUMO2) linkage. Phosphoserine is present on serine 423. 3 positions are modified to phosphoserine: serine 532, serine 614, and serine 624. Polar residues predominate over residues glycine 613–proline 625. Residue threonine 626 is modified to Phosphothreonine. Serine 633 bears the Phosphoserine mark. A Glycyl lysine isopeptide (Lys-Gly) (interchain with G-Cter in SUMO2) cross-link involves residue lysine 637. Phosphoserine is present on residues serine 697, serine 707, serine 743, and serine 753. Positions arginine 729–glutamate 749 are disordered. A Glycyl lysine isopeptide (Lys-Gly) (interchain with G-Cter in SUMO2) cross-link involves residue lysine 775. 4 disordered regions span residues cysteine 829 to aspartate 894, glutamine 941 to aspartate 974, glutamate 1015 to aspartate 1078, and alanine 1135 to proline 1185. The span at aspartate 830 to lysine 847 shows a compositional bias: basic and acidic residues. A compositionally biased stretch (polar residues) spans serine 849–histidine 858. Residues proline 867–isoleucine 883 show a composition bias toward low complexity. Residues leucine 951–aspartate 974 are compositionally biased toward basic and acidic residues. The segment covering aspartate 1026–aspartate 1037 has biased composition (acidic residues). Phosphoserine is present on serine 1077. The span at serine 1150 to arginine 1165 shows a compositional bias: basic and acidic residues. At serine 1201 the chain carries Phosphoserine. Disordered regions lie at residues glycine 1232 to threonine 1254, tryptophan 1280 to isoleucine 1346, and asparagine 1366 to glutamine 1396. Composition is skewed to polar residues over residues phenylalanine 1235–threonine 1254 and arginine 1319–asparagine 1329. A compositionally biased stretch (basic and acidic residues) spans asparagine 1366–proline 1377. 3 positions are modified to phosphoserine: serine 1387, serine 1389, and serine 1391. Positions aspartate 1392–serine 1688 are interaction with TUBA1A. Residues isoleucine 1468–glutamine 1522 form the AWS domain. Zn(2+)-binding residues include cysteine 1473, cysteine 1475, cysteine 1490, cysteine 1494, cysteine 1503, cysteine 1507, and cysteine 1513. The SET domain maps to alanine 1524–glutamine 1641. S-adenosyl-L-methionine-binding positions include lysine 1534–tryptophan 1536, histidine 1577–tyrosine 1579, and asparagine 1602–histidine 1603. Cysteine 1605 contacts Zn(2+). The Post-SET domain maps to glutamate 1648 to glycine 1664. Glutamine 1650 contributes to the S-adenosyl-L-methionine binding site. Cysteine 1652 lines the Zn(2+) pocket. Phenylalanine 1653 contacts S-adenosyl-L-methionine. Zn(2+) contacts are provided by cysteine 1654 and cysteine 1659. Serine 1670, serine 1818, and serine 1819 each carry phosphoserine. The tract at residues threonine 1806–lysine 1848 is disordered. Positions serine 1818–aspartate 1833 are enriched in polar residues. Phosphothreonine is present on residues threonine 1827 and threonine 1846. Phosphoserine occurs at positions 1862 and 1926. Disordered regions lie at residues serine 1914–aspartate 1981 and leucine 1993–glutamine 2110. Basic and acidic residues predominate over residues threonine 1934 to glutamate 1946. The segment covering threonine 1947–valine 1964 has biased composition (acidic residues). Serine 1954, serine 1962, and serine 1969 each carry phosphoserine. 3 stretches are compositionally biased toward basic and acidic residues: residues glutamate 1965 to aspartate 1978, leucine 1993 to alanine 2020, and arginine 2032 to lysine 2045. Phosphoserine is present on residues serine 2053 and serine 2055. Composition is skewed to basic and acidic residues over residues arginine 2063–aspartate 2073 and lysine 2084–glutamine 2108. The stretch at serine 2090–methionine 2119 forms a coiled coil. The interval glutamine 2110–proline 2339 is low charge region. The WW domain maps to isoleucine 2362 to tryptophan 2395. Residues leucine 2412–glutamate 2438 form a disordered region. Positions threonine 2430 to glutamate 2537 are interaction with POLR2A.

Belongs to the class V-like SAM-binding methyltransferase superfamily. Histone-lysine methyltransferase family. SET2 subfamily. In terms of assembly, specifically interacts with hyperphosphorylated C-terminal domain (CTD) of RNA polymerase II large subunit (POLR2A): binds to CTD heptad repeats doubly phosphorylated on 'Ser-2' and 'Ser-5' of each heptad. Interacts with HTT. Interacts with IWS1. Interacts with p53/TP53; leading to regulate p53/TP53 target genes. Component of a complex with HNRNPL. Interacts with TUBA1A; the interaction is independent on alpha-tubulin acetylation on 'Lys-40'. In terms of processing, may be automethylated.

Its subcellular location is the nucleus. It localises to the chromosome. The catalysed reaction is L-lysyl(36)-[histone H3] + 3 S-adenosyl-L-methionine = N(6),N(6),N(6)-trimethyl-L-lysyl(36)-[histone H3] + 3 S-adenosyl-L-homocysteine + 3 H(+). The enzyme catalyses L-lysyl-[protein] + S-adenosyl-L-methionine = N(6)-methyl-L-lysyl-[protein] + S-adenosyl-L-homocysteine + H(+). It carries out the reaction L-lysyl-[protein] + 3 S-adenosyl-L-methionine = N(6),N(6),N(6)-trimethyl-L-lysyl-[protein] + 3 S-adenosyl-L-homocysteine + 3 H(+). With respect to regulation, specifically inhibited by sinefungin derivatives. Histone methyltransferase that specifically trimethylates 'Lys-36' of histone H3 (H3K36me3) using dimethylated 'Lys-36' (H3K36me2) as substrate. It is capable of trimethylating unmethylated H3K36 (H3K36me0) in vitro. Represents the main enzyme generating H3K36me3, a specific tag for epigenetic transcriptional activation. Plays a role in chromatin structure modulation during elongation by coordinating recruitment of the FACT complex and by interacting with hyperphosphorylated POLR2A. Acts as a key regulator of DNA mismatch repair in G1 and early S phase by generating H3K36me3, a mark required to recruit MSH6 subunit of the MutS alpha complex: early recruitment of the MutS alpha complex to chromatin to be replicated allows a quick identification of mismatch DNA to initiate the mismatch repair reaction. Required for DNA double-strand break repair in response to DNA damage: acts by mediating formation of H3K36me3, promoting recruitment of RAD51 and DNA repair via homologous recombination (HR). Acts as a tumor suppressor. H3K36me3 also plays an essential role in the maintenance of a heterochromatic state, by recruiting DNA methyltransferase DNMT3A. H3K36me3 is also enhanced in intron-containing genes, suggesting that SETD2 recruitment is enhanced by splicing and that splicing is coupled to recruitment of elongating RNA polymerase. Required during angiogenesis. Required for endoderm development by promoting embryonic stem cell differentiation toward endoderm: acts by mediating formation of H3K36me3 in distal promoter regions of FGFR3, leading to regulate transcription initiation of FGFR3. In addition to histones, also mediates methylation of other proteins, such as tubulins and STAT1. Trimethylates 'Lys-40' of alpha-tubulins such as TUBA1B (alpha-TubK40me3); alpha-TubK40me3 is required for normal mitosis and cytokinesis and may be a specific tag in cytoskeletal remodeling. Involved in interferon-alpha-induced antiviral defense by mediating both monomethylation of STAT1 at 'Lys-525' and catalyzing H3K36me3 on promoters of some interferon-stimulated genes (ISGs) to activate gene transcription. This is Histone-lysine N-methyltransferase SETD2 from Mus musculus (Mouse).